Consider the following 389-residue polypeptide: Methionyl-tRNA formyltransferase, mitochondrial (389 aa).

This sequence belongs to the Fmt family.

The protein resides in the mitochondrion. It catalyses the reaction L-methionyl-tRNA(fMet) + (6R)-10-formyltetrahydrofolate = N-formyl-L-methionyl-tRNA(fMet) + (6S)-5,6,7,8-tetrahydrofolate + H(+). Its function is as follows. Methionyl-tRNA formyltransferase that formylates methionyl-tRNA in mitochondria and is crucial for translation initiation. The sequence is that of Methionyl-tRNA formyltransferase, mitochondrial (MTFMT) from Homo sapiens (Human).